The primary structure comprises 1121 residues: Cilia- and flagella-associated protein 70 (1121 aa).

Basic and acidic residues predominate over residues 410–428; that stretch reads NLKEDKPVKEKDIDGRPRP. Residues 410-457 form a disordered region; it reads NLKEDKPVKEKDIDGRPRPGDVQAPSIKSQSSDTPLEGEPPLSHNPEG. TPR repeat units lie at residues 635 to 668, 669 to 702, and 704 to 736; these read SEQL…EPQN, LDHW…NQSH, and HSLL…EPTN. 2 disordered regions span residues 778 to 802 and 836 to 858; these read KQKS…PWGI and QSDS…QKPS. TPR repeat units lie at residues 929–962, 963–996, 1000–1033, 1035–1066, and 1068–1100; these read CEYY…DYLN, PNVW…VVDA, HFIF…SPSC, TWLG…NNYN, and EVWA…KLKD.

The protein belongs to the CFAP70 family. In terms of tissue distribution, expressed in testis.

The protein localises to the cell projection. The protein resides in the cilium. It is found in the flagellum. Its subcellular location is the cytoplasm. It localises to the cytoskeleton. The protein localises to the flagellum basal body. The protein resides in the cilium axoneme. Its function is as follows. Axoneme-binding protein that plays a role in the regulation of ciliary motility and cilium length. This is Cilia- and flagella-associated protein 70 from Homo sapiens (Human).